Here is a 270-residue protein sequence, read N- to C-terminus: Orotidine 5'-phosphate decarboxylase (270 aa).

Substrate is bound by residues D41, 63 to 65 (KTH), 95 to 104 (DRKFADIGNT), Y221, and R239. K97 serves as the catalytic Proton donor.

It belongs to the OMP decarboxylase family.

The enzyme catalyses orotidine 5'-phosphate + H(+) = UMP + CO2. It functions in the pathway pyrimidine metabolism; UMP biosynthesis via de novo pathway; UMP from orotate: step 2/2. This chain is Orotidine 5'-phosphate decarboxylase (URA3), found in Candida boidinii (Yeast).